The chain runs to 543 residues: Small conductance calcium-activated potassium channel protein 1 (543 aa).

A disordered region spans residues 1–92 (MNSHSYNGSV…SGKPSNVGHR (92 aa)). Acidic residues predominate over residues 65-76 (DQDDDEDDEEDE). A helical membrane pass occupies residues 111-131 (LIFGMFGIVVMVTETELSWGV). Residues 140-160 (FALKCLISLSTAILLGLVVLY) form a helical membrane-spanning segment. A helical membrane pass occupies residues 179–199 (IAMTCERVFLISLELAVCAIH). A helical membrane pass occupies residues 228-248 (VLLSIPMFLRLYLLGRVMLLH). Residues 277 to 297 (LMTICPGTVLLVFSISSWIIA) traverse the membrane as a helical segment. An intramembrane region (pore-forming) is located at residues 317-337 (FLGAMWLISITFLSIGYGDMV). The chain crosses the membrane as a helical span at residues 346–366 (VCLLTGIMGAGCTALVVAVVA). A calmodulin-binding region spans residues 384 to 463 (DTQLTKRVKN…LTDLAKTQTV (80 aa)). The segment at 505–543 (QAIRPPPPPLPPRPGPGPQDQAARSSPCRWTPVAPSDCG) is disordered. Pro residues predominate over residues 508 to 521 (RPPPPPLPPRPGPG).

Belongs to the potassium channel KCNN family. KCa2.1/KCNN1 subfamily. As to quaternary structure, homodimer. Heteromultimer with KCNN2 and KCNN3. The complex is composed of 4 channel subunits each of which binds to a calmodulin subunit which regulates the channel activity through calcium-binding. Interacts with calmodulin.

The protein localises to the membrane. It localises to the cytoplasm. The protein resides in the myofibril. Its subcellular location is the sarcomere. It is found in the z line. The catalysed reaction is K(+)(in) = K(+)(out). Inhibited by bee venom neurotoxin apamin. Inhibited by d-tubocurarine and tetraethylammonium (TEA). Small conductance calcium-activated potassium channel that mediates the voltage-independent transmembrane transfer of potassium across the cell membrane through a constitutive interaction with calmodulin which binds the intracellular calcium allowing its opening. The current is characterized by a voltage-independent activation, an intracellular calcium concentration increase-dependent activation and a single-channel conductance of about 3 picosiemens. Also presents an inwardly rectifying current, thus reducing its already small outward conductance of potassium ions, which is particularly the case when the membrane potential displays positive values, above + 20 mV. Activation is followed by membrane hyperpolarization. Thought to regulate neuronal excitability by contributing to the slow component of synaptic afterhyperpolarization. This Homo sapiens (Human) protein is Small conductance calcium-activated potassium channel protein 1.